The primary structure comprises 67 residues: Large ribosomal subunit protein bL32 (67 aa).

The disordered stretch occupies residues 1–44; that stretch reads MAVQQNRKSPSKRDMRRSHDALGFSTLSTDSKSGERHRRHHVTK. Positions 11 to 20 are enriched in basic and acidic residues; the sequence is SKRDMRRSHD.

It belongs to the bacterial ribosomal protein bL32 family.

The sequence is that of Large ribosomal subunit protein bL32 from Dichelobacter nodosus (strain VCS1703A).